Consider the following 473-residue polypeptide: Photosystem II CP43 reaction center protein (473 aa).

Residues 1–14 (MKTLYSRRRFYHVE) constitute a propeptide that is removed on maturation. Position 15 is an N-acetylthreonine (Thr15). The residue at position 15 (Thr15) is a Phosphothreonine. Helical transmembrane passes span 69-93 (LFEV…PHLA), 134-155 (LLGP…KDRN), 178-200 (KALY…RKIT), 255-275 (KPFA…LSYS), and 291-312 (WFNN…ASQA). [CaMn4O5] cluster is bound at residue Glu367. Residues 447-471 (RARAAAAGFEKGIDRDFEPVLSMTP) traverse the membrane as a helical segment.

Belongs to the PsbB/PsbC family. PsbC subfamily. PSII is composed of 1 copy each of membrane proteins PsbA, PsbB, PsbC, PsbD, PsbE, PsbF, PsbH, PsbI, PsbJ, PsbK, PsbL, PsbM, PsbT, PsbX, PsbY, PsbZ, Psb30/Ycf12, at least 3 peripheral proteins of the oxygen-evolving complex and a large number of cofactors. It forms dimeric complexes. Binds multiple chlorophylls and provides some of the ligands for the Ca-4Mn-5O cluster of the oxygen-evolving complex. It may also provide a ligand for a Cl- that is required for oxygen evolution. PSII binds additional chlorophylls, carotenoids and specific lipids. is required as a cofactor.

The protein localises to the plastid. The protein resides in the chloroplast thylakoid membrane. One of the components of the core complex of photosystem II (PSII). It binds chlorophyll and helps catalyze the primary light-induced photochemical processes of PSII. PSII is a light-driven water:plastoquinone oxidoreductase, using light energy to abstract electrons from H(2)O, generating O(2) and a proton gradient subsequently used for ATP formation. This chain is Photosystem II CP43 reaction center protein, found in Solanum bulbocastanum (Wild potato).